The chain runs to 532 residues: Pyruvate kinase (532 aa).

Arg-63 serves as a coordination point for substrate. Residues Asn-65, Ser-67, Asp-99, and Thr-100 each coordinate K(+). 65 to 68 contacts ATP; it reads NFSH. The ATP site is built by Arg-106 and Lys-191. Glu-256 is a Mg(2+) binding site. Substrate-binding residues include Gly-279, Asp-280, and Thr-312. Asp-280 is a Mg(2+) binding site.

Belongs to the pyruvate kinase family. Homotetramer. Mg(2+) is required as a cofactor. Requires K(+) as cofactor.

It carries out the reaction pyruvate + ATP = phosphoenolpyruvate + ADP + H(+). It functions in the pathway carbohydrate degradation; glycolysis; pyruvate from D-glyceraldehyde 3-phosphate: step 5/5. The polypeptide is Pyruvate kinase (pkiA) (Agaricus bisporus (White button mushroom)).